Consider the following 156-residue polypeptide: Snaclec A1 (156 aa).

A signal peptide spans 1 to 23; it reads MGRSISVSFGLLVVFLSLSGTGA. 3 disulfides stabilise this stretch: Cys27/Cys38, Cys55/Cys154, and Cys129/Cys146. Positions 34–155 constitute a C-type lectin domain; the sequence is HEGHCYKVFN…CGQPYRFTCE (122 aa).

This sequence belongs to the snaclec family. As to quaternary structure, heterodimer; disulfide-linked. In terms of tissue distribution, expressed by the venom gland.

The protein localises to the secreted. Functionally, interferes with one step of hemostasis (modulation of platelet aggregation, or coagulation cascade, for example). This is Snaclec A1 from Macrovipera lebetinus (Levantine viper).